We begin with the raw amino-acid sequence, 715 residues long: Elongation factor G (715 aa).

One can recognise a tr-type G domain in the interval 8 to 290; that stretch reads NRYRNIGICA…AVIDFLPAPT (283 aa). GTP contacts are provided by residues 17–24, 88–92, and 142–145; these read AHVDAGKT, DTPGH, and NKMD.

It belongs to the TRAFAC class translation factor GTPase superfamily. Classic translation factor GTPase family. EF-G/EF-2 subfamily.

It localises to the cytoplasm. Its function is as follows. Catalyzes the GTP-dependent ribosomal translocation step during translation elongation. During this step, the ribosome changes from the pre-translocational (PRE) to the post-translocational (POST) state as the newly formed A-site-bound peptidyl-tRNA and P-site-bound deacylated tRNA move to the P and E sites, respectively. Catalyzes the coordinated movement of the two tRNA molecules, the mRNA and conformational changes in the ribosome. The polypeptide is Elongation factor G (Ectopseudomonas mendocina (strain ymp) (Pseudomonas mendocina)).